The chain runs to 101 residues: YcgL domain-containing protein ABBFA_001807 (101 aa).

The YcgL domain maps to 1 to 92 (MHCDIYRSSK…PPEGLINPNA (92 aa)).

The chain is YcgL domain-containing protein ABBFA_001807 from Acinetobacter baumannii (strain AB307-0294).